A 266-amino-acid polypeptide reads, in one-letter code: CAAX prenyl protease 2 (266 aa).

The next 3 helical transmembrane spans lie at 1 to 21 (MGAG…VHLF), 42 to 59 (LLSN…LRDY), and 78 to 98 (ITYP…MMQI). Residues Glu-131 and His-164 each act as proton donor/acceptor in the active site. A run of 3 helical transmembrane segments spans residues 186–206 (GFQF…QLTT), 210–230 (IVPI…WLEI), and 239–259 (RLTL…LLYT).

It belongs to the peptidase U48 family.

The protein localises to the endoplasmic reticulum membrane. It localises to the membrane. The catalysed reaction is Hydrolyzes the peptide bond -P2-(S-farnesyl or geranylgeranyl)C-P1'-P2'-P3'-COOH where P1' and P2' are amino acids with aliphatic sidechains and P3' is any C-terminal residue.. In terms of biological role, protease involved in the processing of a variety of prenylated proteins containing the C-terminal CAAX motif, where C is a cysteine modified with an isoprenoid lipid, A is an aliphatic amino acid and X is any C-terminal amino acid. Proteolytically removes the C-terminal three residues of farnesylated and geranylated proteins, leaving the prenylated cysteine as the new C-terminus. This Caenorhabditis elegans protein is CAAX prenyl protease 2.